We begin with the raw amino-acid sequence, 293 residues long: 4-hydroxy-tetrahydrodipicolinate synthase (293 aa).

A pyruvate-binding site is contributed by T47. Y135 (proton donor/acceptor) is an active-site residue. K163 functions as the Schiff-base intermediate with substrate in the catalytic mechanism. V205 contributes to the pyruvate binding site.

This sequence belongs to the DapA family. In terms of assembly, homotetramer; dimer of dimers.

It localises to the cytoplasm. It catalyses the reaction L-aspartate 4-semialdehyde + pyruvate = (2S,4S)-4-hydroxy-2,3,4,5-tetrahydrodipicolinate + H2O + H(+). It functions in the pathway amino-acid biosynthesis; L-lysine biosynthesis via DAP pathway; (S)-tetrahydrodipicolinate from L-aspartate: step 3/4. In terms of biological role, catalyzes the condensation of (S)-aspartate-beta-semialdehyde [(S)-ASA] and pyruvate to 4-hydroxy-tetrahydrodipicolinate (HTPA). The sequence is that of 4-hydroxy-tetrahydrodipicolinate synthase from Leptothrix cholodnii (strain ATCC 51168 / LMG 8142 / SP-6) (Leptothrix discophora (strain SP-6)).